A 158-amino-acid chain; its full sequence is UPF0758 protein YkfG (158 aa).

The MPN domain occupies 36 to 158; sequence AFTSTHAVRE…IYSFAEHGLL (123 aa). Zn(2+)-binding residues include His107, His109, and Asp120. The JAMM motif signature appears at 107–120; it reads HNHPSGETTPSQAD.

The protein belongs to the UPF0758 family.

The protein is UPF0758 protein YkfG (ykfG) of Escherichia coli (strain K12).